We begin with the raw amino-acid sequence, 356 residues long: uncharacterized protein (356 aa).

Residues M1–C21 form the signal peptide. Residues R293–V317 are disordered.

This is an uncharacterized protein from Acanthamoeba polyphaga mimivirus (APMV).